Reading from the N-terminus, the 241-residue chain is Uridylate kinase (241 aa).

Position 12-15 (12-15) interacts with ATP; it reads KLSG. The involved in allosteric activation by GTP stretch occupies residues 20-25; it reads GDKGVG. A UMP-binding site is contributed by G54. ATP is bound by residues G55 and R59. UMP is bound by residues D74 and 135–142; that span reads IGSPYFST. 3 residues coordinate ATP: N163, Y169, and D172.

This sequence belongs to the UMP kinase family. Homohexamer.

The protein localises to the cytoplasm. It carries out the reaction UMP + ATP = UDP + ADP. It participates in pyrimidine metabolism; CTP biosynthesis via de novo pathway; UDP from UMP (UMPK route): step 1/1. With respect to regulation, allosterically activated by GTP. Inhibited by UTP. Catalyzes the reversible phosphorylation of UMP to UDP. In Streptococcus gordonii (strain Challis / ATCC 35105 / BCRC 15272 / CH1 / DL1 / V288), this protein is Uridylate kinase.